A 146-amino-acid chain; its full sequence is Deoxyuridine 5'-triphosphate nucleotidohydrolase (146 aa).

Residues R66–G68, N79, and T83–D85 contribute to the substrate site.

Belongs to the dUTPase family. Requires Mg(2+) as cofactor.

The enzyme catalyses dUTP + H2O = dUMP + diphosphate + H(+). Its pathway is pyrimidine metabolism; dUMP biosynthesis; dUMP from dCTP (dUTP route): step 2/2. In terms of biological role, this enzyme is involved in nucleotide metabolism: it produces dUMP, the immediate precursor of thymidine nucleotides and it decreases the intracellular concentration of dUTP so that uracil cannot be incorporated into DNA. This Citrifermentans bemidjiense (strain ATCC BAA-1014 / DSM 16622 / JCM 12645 / Bem) (Geobacter bemidjiensis) protein is Deoxyuridine 5'-triphosphate nucleotidohydrolase.